A 710-amino-acid chain; its full sequence is DNA ligase (710 aa).

The disordered stretch occupies residues 1-36 (MTSSSPRHADPDENPYVEAPPTDFEPVGALSEDEAT). NAD(+) is bound by residues 63–67 (DETYD), 111–112 (SI), and Glu147. Lys149 serves as the catalytic N6-AMP-lysine intermediate. Arg170, Glu206, and Lys353 together coordinate NAD(+). Positions 444, 447, 460, and 466 each coordinate Zn(2+). The region spanning 623–710 (ETGDALDGLT…ERGVAWPPEE (88 aa)) is the BRCT domain. Positions 657-689 (ATSSVSGNTDYLVAGESPGRSKRDDADAEGVPV) are disordered.

The protein belongs to the NAD-dependent DNA ligase family. LigA subfamily. Mg(2+) is required as a cofactor. It depends on Mn(2+) as a cofactor.

The enzyme catalyses NAD(+) + (deoxyribonucleotide)n-3'-hydroxyl + 5'-phospho-(deoxyribonucleotide)m = (deoxyribonucleotide)n+m + AMP + beta-nicotinamide D-nucleotide.. Its function is as follows. DNA ligase that catalyzes the formation of phosphodiester linkages between 5'-phosphoryl and 3'-hydroxyl groups in double-stranded DNA using NAD as a coenzyme and as the energy source for the reaction. It is essential for DNA replication and repair of damaged DNA. This chain is DNA ligase, found in Halorubrum lacusprofundi (strain ATCC 49239 / DSM 5036 / JCM 8891 / ACAM 34).